The sequence spans 423 residues: Carboxypeptidase S1 (423 aa).

4 disulfides stabilise this stretch: Cys8–Cys68, Cys55–Cys300, Cys223–Cys246, and Cys230–Cys239. Ser143 is a catalytic residue. N-linked (GlcNAc...) asparagine glycosylation is present at Asn200. The active site involves Asp340. Cys343 serves as a coordination point for substrate. Residue His397 is part of the active site. Position 398 (Glu398) interacts with substrate.

The protein belongs to the peptidase S10 family.

The enzyme catalyses Preferential release of a C-terminal arginine or lysine residue.. The protein is Carboxypeptidase S1 of Penicillium janthinellum (Penicillium vitale).